The chain runs to 158 residues: NADH-quinone oxidoreductase subunit B (158 aa).

[4Fe-4S] cluster contacts are provided by Cys37, Cys38, Cys102, and Cys132.

Belongs to the complex I 20 kDa subunit family. As to quaternary structure, NDH-1 is composed of 14 different subunits. Subunits NuoB, C, D, E, F, and G constitute the peripheral sector of the complex. Requires [4Fe-4S] cluster as cofactor.

It localises to the cell inner membrane. It catalyses the reaction a quinone + NADH + 5 H(+)(in) = a quinol + NAD(+) + 4 H(+)(out). NDH-1 shuttles electrons from NADH, via FMN and iron-sulfur (Fe-S) centers, to quinones in the respiratory chain. Couples the redox reaction to proton translocation (for every two electrons transferred, four hydrogen ions are translocated across the cytoplasmic membrane), and thus conserves the redox energy in a proton gradient. The chain is NADH-quinone oxidoreductase subunit B from Nitrosomonas europaea (strain ATCC 19718 / CIP 103999 / KCTC 2705 / NBRC 14298).